Reading from the N-terminus, the 574-residue chain is FAD-linked oxidoreductase penH (574 aa).

The first 25 residues, 1–25, serve as a signal peptide directing secretion; it reads MLPRALTLSALLALLLAIYLALAPA. N-linked (GlcNAc...) asparagine glycosylation is found at asparagine 48, asparagine 107, asparagine 193, asparagine 368, and asparagine 385. The region spanning 121 to 305 is the FAD-binding PCMH-type domain; sequence HQGRIPLYAA…VRVTMRTYPD (185 aa).

This sequence belongs to the oxygen-dependent FAD-linked oxidoreductase family. Requires FAD as cofactor.

It carries out the reaction peniprequinolone + A = yaequinolone E + AH2. It functions in the pathway secondary metabolite biosynthesis. The protein operates within alkaloid biosynthesis. It participates in mycotoxin biosynthesis. Functionally, FAD-linked oxidoreductase; part of the gene cluster that mediates the biosynthesis of penigequinolones, potent insecticidal alkaloids that contain a highly modified 10-carbon prenyl group. The first stage is catalyzed by the nonribosomal peptide synthetase penN that condenses anthranilic acid and O-methyl-L-tyrosine to produce 4'-methoxycyclopeptin. 4'-methoxycyclopeptin is then converted to 4'-methoxydehydrocyclopeptin by the ketoglutarate-dependent dioxygenase penM through dehydrogenation to form a double bond between C-alpha and C-beta of the O-methyltyrosine side chain. PenM also converts its first product methoxydehydrocyclopeptin to 4'-methoxycyclopenin. The following conversion of 4'methoxycyclopenin into 4'-methoxyviridicatin is catalyzed by the cyclopenase penL. 4'-methoxyviridicatin is the precursor of quinolone natural products, and is further converted to quinolinone B. The prenyltransferase penI then catalyzes the canonical Friedel-Crafts alkylation of quinolinone B with dimethylallyl cation to yield dimethylallyl quinolone, which is subjected to FAD-dependent dehydrogenation by the FAD-linked oxidoreductase penH to yield conjugated aryl diene. The delta(3') double bond then serves as the site of the second alkylation with DMAPP catalyzed by the prenyltransferase penG to yield a carbenium ion intermediate, which can be attacked by H(2)O to yield a styrenyl quinolone containing a C3'-hydroxyprenyl chain, or undergo cyclization to yield yaequinolones J1 and J2. The conversion of the styrenyl quinolone into the tetrahydrofuran-containing yaequinolone C is performed by the FAD-dependent monooxygenase penE and involves epoxidation of the terminal C7'-C8' olefin, followed by epoxide ring opening initiated by the C3' hydroxyl group. The predicted cysteine hydrolase penJ acts as an epoxide hydrolase that enhances the rate of the 5-exo-tet cyclization step, increasing the yield of yaequinolone C. PenF catalyzes the cationic rearrangement of the epoxide formed by penE (before ring opening to produce yaequinolone C) into yaequinolone D. Finally, the short-chain dehydrogenase/reductase (SDR)-like reductase penD, catalyzes both the dehydration of yaequinolone D and the reduction of the resulting oxonium to yield penigequinolone. The sequence is that of FAD-linked oxidoreductase penH from Penicillium thymicola.